Here is a 640-residue protein sequence, read N- to C-terminus: Probable threonine--tRNA ligase, cytoplasmic (640 aa).

The TGS domain occupies 1–63 (MYEVKLKVEL…LKDCKLELMT (63 aa)).

Belongs to the class-II aminoacyl-tRNA synthetase family.

It is found in the cytoplasm. The catalysed reaction is tRNA(Thr) + L-threonine + ATP = L-threonyl-tRNA(Thr) + AMP + diphosphate + H(+). This chain is Probable threonine--tRNA ligase, cytoplasmic, found in Encephalitozoon cuniculi (strain GB-M1) (Microsporidian parasite).